The chain runs to 284 residues: 2-dehydro-3-deoxyphosphooctonate aldolase (284 aa).

This sequence belongs to the KdsA family.

The protein resides in the cytoplasm. The catalysed reaction is D-arabinose 5-phosphate + phosphoenolpyruvate + H2O = 3-deoxy-alpha-D-manno-2-octulosonate-8-phosphate + phosphate. It participates in carbohydrate biosynthesis; 3-deoxy-D-manno-octulosonate biosynthesis; 3-deoxy-D-manno-octulosonate from D-ribulose 5-phosphate: step 2/3. It functions in the pathway bacterial outer membrane biogenesis; lipopolysaccharide biosynthesis. This chain is 2-dehydro-3-deoxyphosphooctonate aldolase, found in Histophilus somni (strain 2336) (Haemophilus somnus).